We begin with the raw amino-acid sequence, 89 residues long: Small ribosomal subunit protein uS15 (89 aa).

This sequence belongs to the universal ribosomal protein uS15 family. As to quaternary structure, part of the 30S ribosomal subunit. Forms a bridge to the 50S subunit in the 70S ribosome, contacting the 23S rRNA.

One of the primary rRNA binding proteins, it binds directly to 16S rRNA where it helps nucleate assembly of the platform of the 30S subunit by binding and bridging several RNA helices of the 16S rRNA. Its function is as follows. Forms an intersubunit bridge (bridge B4) with the 23S rRNA of the 50S subunit in the ribosome. The sequence is that of Small ribosomal subunit protein uS15 from Treponema denticola (strain ATCC 35405 / DSM 14222 / CIP 103919 / JCM 8153 / KCTC 15104).